Reading from the N-terminus, the 103-residue chain is Large ribosomal subunit protein bL21 (103 aa).

This sequence belongs to the bacterial ribosomal protein bL21 family. In terms of assembly, part of the 50S ribosomal subunit. Contacts protein L20.

In terms of biological role, this protein binds to 23S rRNA in the presence of protein L20. The chain is Large ribosomal subunit protein bL21 from Pasteurella multocida (strain Pm70).